A 43-amino-acid polypeptide reads, in one-letter code: Subtilosin-A (43 aa).

Residues 1–8 constitute a propeptide that is removed on maturation; that stretch reads MKKAVIVE. The segment at residues 9-43 is a cross-link (cyclopeptide (Asn-Gly)); that stretch reads NKGCATCSIGAACLVDGPIPDFEIAGATGLFGLWG. The segment at residues 12 to 39 is a cross-link (2-cysteinyl-D-phenylalanine (Cys-Phe)); sequence CATCSIGAACLVDGPIPDFEIAGATGLF. A cross-link (2-cysteinyl-D-allo-threonine (Cys-Thr)) is located at residues 15 to 36; that stretch reads CSIGAACLVDGPIPDFEIAGAT. Positions 21-30 form a cross-link, 2-cysteinyl-L-phenylalanine (Cys-Phe); the sequence is CLVDGPIPDF.

The protein belongs to the bacteriocin class V family. In terms of processing, this sactipeptide undergoes unique processing steps that include proteolytic cleavage after Glu-8, and covalent linkage of the alpha-amino of Asn-9 with the carboxyl of Gly-43 to form a cyclopeptide. Thioether cross-links are formed between cysteines and the alpha-carbons of other amino acids, Cys-12 to Phe-39, Cys-15 to Thr-36, and Cys-21 to Phe-30. In forming these cross-links, Thr-36 and Phe-39 are converted to D-amino acids. Propeptide cleavage and cyclopeptide formation only occur after all 3 thioether cross-links are formed.

It localises to the secreted. Has bacteriocidal activity against some Gram-positive bacteria such as Listeria, some species of Bacillus and E.faecium. A single mutation (Thr-14-Ile) confers hemolytic activity against rabbit and human blood. This Bacillus subtilis (strain 168) protein is Subtilosin-A (sboA).